The chain runs to 204 residues: Probable GTP-binding protein EngB (204 aa).

The EngB-type G domain maps to 27–201 (SGIEIAFAGR…SEKLDQWFSP (175 aa)). GTP contacts are provided by residues 35-42 (GRSNAGKS), 62-66 (GRTQL), 80-83 (DLPG), 147-150 (TKAD), and 180-182 (FSA). The Mg(2+) site is built by serine 42 and threonine 64.

It belongs to the TRAFAC class TrmE-Era-EngA-EngB-Septin-like GTPase superfamily. EngB GTPase family. The cofactor is Mg(2+).

Necessary for normal cell division and for the maintenance of normal septation. This Histophilus somni (strain 129Pt) (Haemophilus somnus) protein is Probable GTP-binding protein EngB.